A 249-amino-acid polypeptide reads, in one-letter code: Flavin-dependent thymidylate synthase (249 aa).

The ThyX domain maps to 7-235 (LDVQLIAATA…PVLFDDFHIT (229 aa)). Residues 94–97 (ELVR), 105–109 (QLSQR), and R174 each bind dUMP. Residues 97–99 (RHR) and Q105 each bind FAD. Residues 97–107 (RHRHFSFSQLS) carry the ThyX motif motif. Residues 190-192 (NYR) and H196 contribute to the FAD site. DUMP is bound at residue R201. Catalysis depends on R201, which acts as the Involved in ionization of N3 of dUMP, leading to its activation.

Belongs to the thymidylate synthase ThyX family. Homotetramer. FAD serves as cofactor.

The enzyme catalyses dUMP + (6R)-5,10-methylene-5,6,7,8-tetrahydrofolate + NADPH + H(+) = dTMP + (6S)-5,6,7,8-tetrahydrofolate + NADP(+). It functions in the pathway pyrimidine metabolism; dTTP biosynthesis. Functionally, catalyzes the reductive methylation of 2'-deoxyuridine-5'-monophosphate (dUMP) to 2'-deoxythymidine-5'-monophosphate (dTMP) while utilizing 5,10-methylenetetrahydrofolate (mTHF) as the methyl donor, and NADPH and FADH(2) as the reductant. This chain is Flavin-dependent thymidylate synthase, found in Corynebacterium aurimucosum (strain ATCC 700975 / DSM 44827 / CIP 107346 / CN-1) (Corynebacterium nigricans).